The sequence spans 446 residues: Phosphoglucosamine mutase (446 aa).

Residue Ser100 is the Phosphoserine intermediate of the active site. The Mg(2+) site is built by Ser100, Asp241, Asp243, and Asp245. Ser100 bears the Phosphoserine mark.

This sequence belongs to the phosphohexose mutase family. The cofactor is Mg(2+). Activated by phosphorylation.

The enzyme catalyses alpha-D-glucosamine 1-phosphate = D-glucosamine 6-phosphate. Its function is as follows. Catalyzes the conversion of glucosamine-6-phosphate to glucosamine-1-phosphate. This is Phosphoglucosamine mutase from Methylobacterium nodulans (strain LMG 21967 / CNCM I-2342 / ORS 2060).